The following is a 714-amino-acid chain: MEMASAFTLNVRLDNIAIITIDVPGEKMNTLKAEFASQVRAIIKQIRENKELRGVVFVSAKPDNFIAGADINMIGNCKTAQEAEVLARQGQQLMAEIHALPIPVIAAIHGACLGGGLELALACHGRVCTDDPKTVLGLPEVQLGLLPGSGGTQRLPRLIGVSTALEMILTGKQLRAKQAVKLGLVDDVVPHSILLEAAVELAKQDRPSSRPLPVRERILAGPLGRALLFKMVGKKTEHKTQGNYPATERILEVVETGLAQGTSSGYDAEARAFGELAMTPQSQALRNIFFASTDVKKDPGSDAPPAPLNSVGILGGGLMGGGIAYVTACKAGLPVRIKDINPRGINHALKYSWDQLEGKVRRRHLKASERDKQLALISGTTDYCGFAHRDLIIEAVFENLELKQQMVAEVEQNCATHTIFASNTSSLPIGDIAAHAARPEQVIGLHFFSPVEKMPLVEIIPHASTSAQTIATTVKLAKKQGKTPIVVRDKAGFYVNRILAPYINEAIRMLTEGERIEHIDAALVKFGFPVGPIQLLDEVGIDTGTKIMPVLEAAYGERFSAPANVVSSILNDDRKGRKNGRGFYLYGQKGCKSKKQVDPAIYPLIGAQGQGRLSAPQVAERCVMLMLNEAVRCLDEQVIRSVRDGDIGAVFGIGFPPFLGGPFRYIDSLGAGEVVAIMQRLATQYGSRFTPCDRLVEMSERGESFWKTTATDLQ.

The tract at residues M1 to P190 is enoyl-CoA hydratase. A 3-hydroxyacyl-CoA dehydrogenase region spans residues A306 to Q714.

It in the N-terminal section; belongs to the enoyl-CoA hydratase/isomerase family. In the central section; belongs to the 3-hydroxyacyl-CoA dehydrogenase family. Heterotetramer of two alpha chains (FadJ) and two beta chains (FadI).

The protein resides in the cytoplasm. It catalyses the reaction a (3S)-3-hydroxyacyl-CoA = a (2E)-enoyl-CoA + H2O. The catalysed reaction is a 4-saturated-(3S)-3-hydroxyacyl-CoA = a (3E)-enoyl-CoA + H2O. It carries out the reaction a (3S)-3-hydroxyacyl-CoA + NAD(+) = a 3-oxoacyl-CoA + NADH + H(+). The enzyme catalyses (3S)-3-hydroxybutanoyl-CoA = (3R)-3-hydroxybutanoyl-CoA. It functions in the pathway lipid metabolism; fatty acid beta-oxidation. Its function is as follows. Catalyzes the formation of a hydroxyacyl-CoA by addition of water on enoyl-CoA. Also exhibits 3-hydroxyacyl-CoA epimerase and 3-hydroxyacyl-CoA dehydrogenase activities. This is Fatty acid oxidation complex subunit alpha from Escherichia coli O45:K1 (strain S88 / ExPEC).